Consider the following 517-residue polypeptide: Serine O-succinyltransferase (517 aa).

The N-terminal 46 residues, 1 to 46, are a transit peptide targeting the mitochondrion; it reads MSPLNGVARSFPRPFQAVTRRPFRVVQPAIACPSNSRSFNHSRSLR. A compositionally biased stretch (polar residues) spans 36–64; the sequence is SRSFNHSRSLRSTGSQSPAPSPRDSSNPA. The disordered stretch occupies residues 36-66; it reads SRSFNHSRSLRSTGSQSPAPSPRDSSNPALS. Residues 134 to 386 form the AB hydrolase-1 domain; that stretch reads NVILLHTGLS…LTQQLATKKQ (253 aa). An important for substrate specificity region spans residues 141–144; that stretch reads GLSA. Ser-238 (nucleophile) is an active-site residue. Arg-307 is a substrate binding site. Residues 413–436 are disordered; the sequence is QPYQEQPSASTSAEQSASASETGS. The segment covering 416–436 has biased composition (low complexity); sequence QEQPSASTSAEQSASASETGS. Residues Asp-461 and His-498 contribute to the active site. Asp-499 provides a ligand contact to substrate.

Belongs to the AB hydrolase superfamily. MetX family.

The protein resides in the mitochondrion. The enzyme catalyses succinyl-CoA + L-serine = O-succinyl-L-serine + CoA. It functions in the pathway amino-acid biosynthesis; L-cysteine biosynthesis; L-cysteine from L-serine: step 1/2. Functionally, transfers a succinyl group from succinyl-CoA to L-serine, forming succinyl-L-serine. Also has weak serine acetyl transferase activity and homoserine succinyl transferase activity. This Emericella nidulans (strain FGSC A4 / ATCC 38163 / CBS 112.46 / NRRL 194 / M139) (Aspergillus nidulans) protein is Serine O-succinyltransferase.